Reading from the N-terminus, the 317-residue chain is Protoheme IX farnesyltransferase (317 aa).

7 helical membrane passes run 33–53 (VMSL…GEIN), 54–74 (PILG…SGAL), 117–137 (VILG…TIFF), 154–174 (IVIG…CVTG), 181–201 (VILF…LALF), 242–262 (FFTG…SAIF), and 285–305 (MFAY…ADHF).

The protein belongs to the UbiA prenyltransferase family. Protoheme IX farnesyltransferase subfamily.

Its subcellular location is the cell inner membrane. The enzyme catalyses heme b + (2E,6E)-farnesyl diphosphate + H2O = Fe(II)-heme o + diphosphate. It functions in the pathway porphyrin-containing compound metabolism; heme O biosynthesis; heme O from protoheme: step 1/1. Functionally, converts heme B (protoheme IX) to heme O by substitution of the vinyl group on carbon 2 of heme B porphyrin ring with a hydroxyethyl farnesyl side group. In Agrobacterium fabrum (strain C58 / ATCC 33970) (Agrobacterium tumefaciens (strain C58)), this protein is Protoheme IX farnesyltransferase.